The sequence spans 33 residues: Toxin Bcg III 25.52 (33 aa).

Cysteines 6 and 28 form a disulfide.

The protein localises to the secreted. It is found in the nematocyst. This chain is Toxin Bcg III 25.52, found in Bunodosoma cangicum (Sea anemone).